The following is a 396-amino-acid chain: Adenosine 3'-phospho 5'-phosphosulfate transporter 2 (396 aa).

The disordered stretch occupies residues 22–42 (NGGESAGNSPPSQRKSSTSES). Positions 27 to 42 (AGNSPPSQRKSSTSES) are enriched in polar residues. Phosphoserine is present on residues Ser-37 and Ser-40. An N-linked (GlcNAc...) asparagine glycan is attached at Asn-57. 10 helical membrane passes run 66–86 (CAGVFFLYILYGYLQELIFTV), 91–111 (PYGWFLTLVQFGYYIGFGLVE), 140–160 (LILAALTLGTMGLSNSSLGYL), 163–183 (PTQVIFKCCKLIPVLVGSILI), 189–209 (GLLDFAAATCMCIGLAWFTLA), 216–236 (NFNLLGVAMISGALLCDAAIG), 253–273 (VVFYSYGLGFVYLFVIMLVTG), 290–310 (FGYGFLFSLSGYLGIQFVLAL), 318–338 (IAATVTTARKAVTIAFSFVLF), and 342–362 (FTLQYLWSGLIVVLGIYLNVY).

The protein belongs to the nucleotide-sugar transporter family. SLC35B subfamily.

It is found in the golgi apparatus membrane. Mediates the transport of adenosine 3'-phospho 5'-phosphosulfate (PAPS), from cytosol into Golgi. PAPS is a universal sulfuryl donor for sulfation events that take place in the Golgi. Essential for viability. Involved in glycosaminoglycan synthesis and the subsequent signaling. May be involved in hh and dpp signaling by controlling the sulfation of heparan sulfate (HS). The protein is Adenosine 3'-phospho 5'-phosphosulfate transporter 2 (Papst2) of Drosophila melanogaster (Fruit fly).